A 358-amino-acid polypeptide reads, in one-letter code: MNVTKGGLVLFSANSNASCVELAKRIAERLGVELGKVQVYQEPNRETRVQIQESVRGKDVFIIQTVSKDVNTTIMELLIMVYACRTSCAKTISGVIPYFPYSKQCKMRKRGSIVSKLLASMMCKAGLTHFITMDLHQKEIQGFFNIPVDNLRASPFLLQYIQEEIPDYRNAVIVAKSPSSAKRAQSFAERLRLGLAVIHGEAQDAESDMVDGRHSPPVVKNIGAAMHPSLEIPLMFPKEKPPITVVGDVGGRIAIIVDDIIDDVDSFVAAADTLKERGAYKIFVMATHGLLSSEAPRLIEESTIDEVVVTNTIPHEIQKLQCPKIKTVDISMILSEAIRRIHNGESMSYLFRNIGVDD.

The protein belongs to the ribose-phosphate pyrophosphokinase family.

Seems to play a negative regulatory role in 5-phosphoribose 1-diphosphate synthesis. This chain is Phosphoribosyl pyrophosphate synthase-associated protein 2 (prpsap2), found in Xenopus tropicalis (Western clawed frog).